The primary structure comprises 89 residues: Large ribosomal subunit protein bL28 (89 aa).

The protein belongs to the bacterial ribosomal protein bL28 family.

The polypeptide is Large ribosomal subunit protein bL28 (Chlamydia trachomatis serovar L2 (strain ATCC VR-902B / DSM 19102 / 434/Bu)).